The sequence spans 271 residues: Phosphate import ATP-binding protein PstB 2 (271 aa).

Residues 25 to 266 (MATEDLHVYY…PQEKQTEDYI (242 aa)) enclose the ABC transporter domain. Residue 57–64 (GPSGCGKS) coordinates ATP.

It belongs to the ABC transporter superfamily. Phosphate importer (TC 3.A.1.7) family. As to quaternary structure, the complex is composed of two ATP-binding proteins (PstB), two transmembrane proteins (PstC and PstA) and a solute-binding protein (PstS).

It is found in the cell membrane. The catalysed reaction is phosphate(out) + ATP + H2O = ADP + 2 phosphate(in) + H(+). Its function is as follows. Part of the ABC transporter complex PstSACB involved in phosphate import. Responsible for energy coupling to the transport system. In Listeria monocytogenes serovar 1/2a (strain ATCC BAA-679 / EGD-e), this protein is Phosphate import ATP-binding protein PstB 2.